Here is a 232-residue protein sequence, read N- to C-terminus: Large ribosomal subunit protein uL3 (232 aa).

The protein belongs to the universal ribosomal protein uL3 family. In terms of assembly, part of the 50S ribosomal subunit. Forms a cluster with proteins L14 and L19.

Its function is as follows. One of the primary rRNA binding proteins, it binds directly near the 3'-end of the 23S rRNA, where it nucleates assembly of the 50S subunit. This is Large ribosomal subunit protein uL3 from Sorangium cellulosum (strain So ce56) (Polyangium cellulosum (strain So ce56)).